The sequence spans 603 residues: Baeyer-Villiger monooxygenase (603 aa).

Residues Glu-94, 102–105 (TWYW), Asp-114, Tyr-120, and Val-164 contribute to the FAD site. 112–114 (HCD) serves as a coordination point for NADP(+). NADP(+) is bound by residues 248-254 (TGATGVQ), 271-272 (RT), and 386-387 (KR).

Belongs to the FAD-binding monooxygenase family. FAD serves as cofactor.

Its function is as follows. Catalyzes a Baeyer-Villiger oxidation reaction, i.e. the insertion of an oxygen atom into a carbon-carbon bond adjacent to a carbonyl, which converts ketones to esters or lactones using NADPH and/or NADH as an electron donor. Thus, can convert bicyclo[3.2.0]hept-2-en-6-one into the oxidative lactone products 2-oxabicyclo[3.3.0]oct-6-en-3-one and 3-oxabicyclo[3.3.0]oct-6-en-2-one. Is also able to catalyze the sulfoxidation of methyl phenyl sulfide (thioanisole). The sequence is that of Baeyer-Villiger monooxygenase from Streptomyces coelicolor (strain ATCC BAA-471 / A3(2) / M145).